A 612-amino-acid polypeptide reads, in one-letter code: Dihydroxy-acid dehydratase (612 aa).

A Mg(2+)-binding site is contributed by D81. C122 lines the [2Fe-2S] cluster pocket. Mg(2+) is bound by residues D123 and K124. K124 is subject to N6-carboxylysine. [2Fe-2S] cluster is bound at residue C193. Position 489 (E489) interacts with Mg(2+). The active-site Proton acceptor is the S515.

It belongs to the IlvD/Edd family. As to quaternary structure, homodimer. It depends on [2Fe-2S] cluster as a cofactor. Requires Mg(2+) as cofactor.

The catalysed reaction is (2R)-2,3-dihydroxy-3-methylbutanoate = 3-methyl-2-oxobutanoate + H2O. The enzyme catalyses (2R,3R)-2,3-dihydroxy-3-methylpentanoate = (S)-3-methyl-2-oxopentanoate + H2O. Its pathway is amino-acid biosynthesis; L-isoleucine biosynthesis; L-isoleucine from 2-oxobutanoate: step 3/4. It participates in amino-acid biosynthesis; L-valine biosynthesis; L-valine from pyruvate: step 3/4. Functions in the biosynthesis of branched-chain amino acids. Catalyzes the dehydration of (2R,3R)-2,3-dihydroxy-3-methylpentanoate (2,3-dihydroxy-3-methylvalerate) into 2-oxo-3-methylpentanoate (2-oxo-3-methylvalerate) and of (2R)-2,3-dihydroxy-3-methylbutanoate (2,3-dihydroxyisovalerate) into 2-oxo-3-methylbutanoate (2-oxoisovalerate), the penultimate precursor to L-isoleucine and L-valine, respectively. The chain is Dihydroxy-acid dehydratase from Ectopseudomonas mendocina (strain ymp) (Pseudomonas mendocina).